Reading from the N-terminus, the 117-residue chain is UPF0342 protein LGAS_1451 (117 aa).

This sequence belongs to the UPF0342 family.

The protein is UPF0342 protein LGAS_1451 of Lactobacillus gasseri (strain ATCC 33323 / DSM 20243 / BCRC 14619 / CIP 102991 / JCM 1131 / KCTC 3163 / NCIMB 11718 / NCTC 13722 / AM63).